The sequence spans 507 residues: Capsid vertex component 1 (507 aa).

The disordered stretch occupies residues 219-257 (AAAETSVSKHHPALENPSNIRGSAGGEGGGGRAGTGGTV). The span at 241–257 (SAGGEGGGGRAGTGGTV) shows a compositional bias: gly residues.

The protein belongs to the herpesviridae CVC1 protein family. In terms of assembly, interacts (via C-terminus) with capsid vertex component 2/CVC2.

The protein resides in the virion. The protein localises to the host nucleus. Its function is as follows. Capsid vertex-specific component that plays a role during viral DNA encapsidation, assuring correct genome cleavage and presumably stabilizing capsids that contain full-length viral genomes. The chain is Capsid vertex component 1 from Epstein-Barr virus (strain B95-8) (HHV-4).